Here is a 295-residue protein sequence, read N- to C-terminus: Light-independent protochlorophyllide reductase iron-sulfur ATP-binding protein (295 aa).

Residues 39-44 (GIGKST) and lysine 68 each bind ATP. Serine 43 provides a ligand contact to Mg(2+). [4Fe-4S] cluster-binding residues include cysteine 124 and cysteine 158. Position 209–210 (209–210 (NR)) interacts with ATP.

It belongs to the NifH/BchL/ChlL family. Homodimer. Protochlorophyllide reductase is composed of three subunits; ChlL, ChlN and ChlB. It depends on [4Fe-4S] cluster as a cofactor.

It catalyses the reaction chlorophyllide a + oxidized 2[4Fe-4S]-[ferredoxin] + 2 ADP + 2 phosphate = protochlorophyllide a + reduced 2[4Fe-4S]-[ferredoxin] + 2 ATP + 2 H2O. Its pathway is porphyrin-containing compound metabolism; chlorophyll biosynthesis (light-independent). In terms of biological role, component of the dark-operative protochlorophyllide reductase (DPOR) that uses Mg-ATP and reduced ferredoxin to reduce ring D of protochlorophyllide (Pchlide) to form chlorophyllide a (Chlide). This reaction is light-independent. The L component serves as a unique electron donor to the NB-component of the complex, and binds Mg-ATP. The sequence is that of Light-independent protochlorophyllide reductase iron-sulfur ATP-binding protein from Prochlorococcus marinus (strain MIT 9515).